We begin with the raw amino-acid sequence, 372 residues long: Dual-specificity RNA methyltransferase RlmN (372 aa).

Glutamate 94 serves as the catalytic Proton acceptor. Residues 100–339 enclose the Radical SAM core domain; that stretch reads DGDRATLCVS…VTIRKTRGDD (240 aa). Cysteine 107 and cysteine 344 form a disulfide bridge. [4Fe-4S] cluster-binding residues include cysteine 114, cysteine 118, and cysteine 121. Residues 168 to 169, serine 200, 222 to 224, and asparagine 301 contribute to the S-adenosyl-L-methionine site; these read GE and SLH. Cysteine 344 functions as the S-methylcysteine intermediate in the catalytic mechanism.

This sequence belongs to the radical SAM superfamily. RlmN family. It depends on [4Fe-4S] cluster as a cofactor.

It is found in the cytoplasm. The catalysed reaction is adenosine(2503) in 23S rRNA + 2 reduced [2Fe-2S]-[ferredoxin] + 2 S-adenosyl-L-methionine = 2-methyladenosine(2503) in 23S rRNA + 5'-deoxyadenosine + L-methionine + 2 oxidized [2Fe-2S]-[ferredoxin] + S-adenosyl-L-homocysteine. The enzyme catalyses adenosine(37) in tRNA + 2 reduced [2Fe-2S]-[ferredoxin] + 2 S-adenosyl-L-methionine = 2-methyladenosine(37) in tRNA + 5'-deoxyadenosine + L-methionine + 2 oxidized [2Fe-2S]-[ferredoxin] + S-adenosyl-L-homocysteine. Specifically methylates position 2 of adenine 2503 in 23S rRNA and position 2 of adenine 37 in tRNAs. m2A2503 modification seems to play a crucial role in the proofreading step occurring at the peptidyl transferase center and thus would serve to optimize ribosomal fidelity. In Aliivibrio fischeri (strain MJ11) (Vibrio fischeri), this protein is Dual-specificity RNA methyltransferase RlmN.